The following is a 331-amino-acid chain: ABSCISIC ACID-INSENSITIVE 5-like protein 1 (331 aa).

A phosphoserine mark is found at Ser-40 and Ser-98. Thr-143 carries the phosphothreonine modification. The bZIP domain occupies 247–310; it reads MERRQRRMIK…RQEIISRSKQ (64 aa). Residues 249 to 268 form a basic motif region; that stretch reads RRQRRMIKNRESAARSRARR. A leucine-zipper region spans residues 275–289; the sequence is LELELNNLTEENTKL. The segment covering 296–320 has biased composition (basic and acidic residues); it reads NEKKRRQEIISRSKQVTKEKSGDKL. A disordered region spans residues 296–331; sequence NEKKRRQEIISRSKQVTKEKSGDKLRKIRRMASAGW.

Belongs to the bZIP family. ABI5 subfamily. In terms of assembly, DNA-binding heterodimer with AREB3/DPBF3 or EEL/DPBF4. Interacts with the AFP proteins AFP1, AFP2 and AFP3. In terms of tissue distribution, predominantly expressed in seeds.

The protein localises to the nucleus. In terms of biological role, could participate in abscisic acid-regulated gene expression during seed development. The polypeptide is ABSCISIC ACID-INSENSITIVE 5-like protein 1 (DPBF2) (Arabidopsis thaliana (Mouse-ear cress)).